A 367-amino-acid chain; its full sequence is Leucine carboxyl methyltransferase 1 (367 aa).

S-adenosyl-L-methionine is bound by residues Arg84, Gly109, Asp132, 187–188 (DL), and Glu212.

The protein belongs to the methyltransferase superfamily. LCMT family.

It carries out the reaction [phosphatase 2A protein]-C-terminal L-leucine + S-adenosyl-L-methionine = [phosphatase 2A protein]-C-terminal L-leucine methyl ester + S-adenosyl-L-homocysteine. Functionally, methylates the carboxyl group of the C-terminal leucine residue of protein phosphatase 2A catalytic subunits to form alpha-leucine ester residues. The polypeptide is Leucine carboxyl methyltransferase 1 (PPM1) (Candida albicans (strain SC5314 / ATCC MYA-2876) (Yeast)).